Consider the following 400-residue polypeptide: Outer membrane protein alpha (400 aa).

A signal peptide spans 1–20 (MKRVLLTVAMLSVFFSAMFA). Residues 21–81 (FFPDVPKDHW…DFIEQKMLAG (61 aa)) form the SLH domain. Residues 85–379 (DLAQVVGNLS…ESVKAYNRNL (295 aa)) are a coiled coil. 3 tandem repeats follow at residues 208 to 232 (VNLH…LNNK), 251 to 275 (VELH…LNKK), and 326 to 350 (VDLH…LNMK). Residues 208 to 350 (VNLHEKDIIN…SSLEEDLNMK (143 aa)) are 3 X 25 AA approximate repeat. A helical membrane pass occupies residues 380–400 (SILTGAFFGILGLILIAISGK).

As to quaternary structure, homotetramer.

The protein resides in the cell outer membrane. In terms of biological role, links the outer membrane to the inner membrane. Long fibrous protein that could serve to separate the two membranes. This chain is Outer membrane protein alpha (omp-alpha), found in Thermotoga maritima (strain ATCC 43589 / DSM 3109 / JCM 10099 / NBRC 100826 / MSB8).